A 304-amino-acid chain; its full sequence is Protease HtpX homolog (304 aa).

Helical transmembrane passes span 14–34 and 39–59; these read VFIILGFFIFVLMVGAAIGII and YLNGLILAAVIGAFYILIMVM. Residue His-144 participates in Zn(2+) binding. Glu-145 is an active-site residue. His-148 contributes to the Zn(2+) binding site. The next 2 membrane-spanning stretches (helical) occupy residues 159–179 and 202–222; these read IAIALVAVIAILSDIAMRMIF and AIIYIVALIFVILAPIIATAI. Glu-231 contributes to the Zn(2+) binding site.

This sequence belongs to the peptidase M48B family. Requires Zn(2+) as cofactor.

The protein localises to the cell membrane. The polypeptide is Protease HtpX homolog (Listeria monocytogenes serotype 4a (strain HCC23)).